The chain runs to 373 residues: Dual-specificity RNA methyltransferase RlmN (373 aa).

Glutamate 94 serves as the catalytic Proton acceptor. The 240-residue stretch at 100-339 (EDDRATLCVS…VIVRKTRGDD (240 aa)) folds into the Radical SAM core domain. The cysteines at positions 107 and 344 are disulfide-linked. Residues cysteine 114, cysteine 118, and cysteine 121 each coordinate [4Fe-4S] cluster. Residues 168-169 (GE), serine 200, 222-224 (SIH), and asparagine 301 each bind S-adenosyl-L-methionine. Residue cysteine 344 is the S-methylcysteine intermediate of the active site.

This sequence belongs to the radical SAM superfamily. RlmN family. Requires [4Fe-4S] cluster as cofactor.

The protein localises to the cytoplasm. The enzyme catalyses adenosine(2503) in 23S rRNA + 2 reduced [2Fe-2S]-[ferredoxin] + 2 S-adenosyl-L-methionine = 2-methyladenosine(2503) in 23S rRNA + 5'-deoxyadenosine + L-methionine + 2 oxidized [2Fe-2S]-[ferredoxin] + S-adenosyl-L-homocysteine. It catalyses the reaction adenosine(37) in tRNA + 2 reduced [2Fe-2S]-[ferredoxin] + 2 S-adenosyl-L-methionine = 2-methyladenosine(37) in tRNA + 5'-deoxyadenosine + L-methionine + 2 oxidized [2Fe-2S]-[ferredoxin] + S-adenosyl-L-homocysteine. Functionally, specifically methylates position 2 of adenine 2503 in 23S rRNA and position 2 of adenine 37 in tRNAs. m2A2503 modification seems to play a crucial role in the proofreading step occurring at the peptidyl transferase center and thus would serve to optimize ribosomal fidelity. The polypeptide is Dual-specificity RNA methyltransferase RlmN (Shewanella denitrificans (strain OS217 / ATCC BAA-1090 / DSM 15013)).